The primary structure comprises 150 residues: uncharacterized protein (150 aa).

4 helical membrane passes run Ile32 to Leu52, Phe64 to Gly84, Ile94 to Phe114, and Leu123 to Met143.

It is found in the cell membrane. This is an uncharacterized protein from Bacillus subtilis (strain 168).